We begin with the raw amino-acid sequence, 616 residues long: Methionine--tRNA ligase, chloroplastic/mitochondrial (616 aa).

Residues 78 to 88 carry the 'HIGH' region motif; it reads YYVNAPPHMGS. The 'KMSKS' region signature appears at 366-370; it reads KMGKS. Lysine 369 contributes to the ATP binding site. Positions 582 to 593 are enriched in basic and acidic residues; it reads LNPEKEEDEKKP. Positions 582–602 are disordered; it reads LNPEKEEDEKKPKVGKKTGKA.

The protein belongs to the class-I aminoacyl-tRNA synthetase family.

The protein resides in the plastid. It localises to the chloroplast. Its subcellular location is the mitochondrion. It catalyses the reaction tRNA(Met) + L-methionine + ATP = L-methionyl-tRNA(Met) + AMP + diphosphate. The polypeptide is Methionine--tRNA ligase, chloroplastic/mitochondrial (Arabidopsis thaliana (Mouse-ear cress)).